The sequence spans 196 residues: Imidazoleglycerol-phosphate dehydratase (196 aa).

Belongs to the imidazoleglycerol-phosphate dehydratase family.

It is found in the cytoplasm. It carries out the reaction D-erythro-1-(imidazol-4-yl)glycerol 3-phosphate = 3-(imidazol-4-yl)-2-oxopropyl phosphate + H2O. It participates in amino-acid biosynthesis; L-histidine biosynthesis; L-histidine from 5-phospho-alpha-D-ribose 1-diphosphate: step 6/9. The polypeptide is Imidazoleglycerol-phosphate dehydratase (Granulibacter bethesdensis (strain ATCC BAA-1260 / CGDNIH1)).